Reading from the N-terminus, the 194-residue chain is 7-methyl-GTP pyrophosphatase (194 aa).

Residue Asp-70 is the Proton acceptor of the active site.

This sequence belongs to the Maf family. YceF subfamily. The cofactor is a divalent metal cation.

It is found in the cytoplasm. It carries out the reaction N(7)-methyl-GTP + H2O = N(7)-methyl-GMP + diphosphate + H(+). Functionally, nucleoside triphosphate pyrophosphatase that hydrolyzes 7-methyl-GTP (m(7)GTP). May have a dual role in cell division arrest and in preventing the incorporation of modified nucleotides into cellular nucleic acids. The protein is 7-methyl-GTP pyrophosphatase of Vibrio vulnificus (strain CMCP6).